The chain runs to 458 residues: MSSVATIKRNIVPPHLEVKGGRPLSGILKVSGAKNSSLALMAAALLTKEKLLIQNVPQLTDIEVMSEILRNLGAKLTKTNNSIEINSESIHNVELPYELVHSLRASFFCVGPLLTRLGEAKIPLPGGCNIGARPVDEHINGLKALGAEVEVINDVVKAKVSTKDKRLLGANITLKYPSVGATETILMASCLASGKTTISNPAREPEIQDLAKMLNSMGAKVFGAGTKRITILGVESLNGTSHCVIPDRIEAGTFLIAAAITRSPLIIGPVIPNHLSAVISKLKECGCSISQHGNHHLKIIPREISGVDITTSPFPGFPTDLQAPFMSLMATAKGSSKIKERVFEKRMQHVLELNKMGACIYLENNTAYIKGVKELVGSNVEGGDLRSSAAIILACLSAKGNSIFTGLEHLDRGYEKLEEKLTNAGSNISRKFDQITSHSSFSNKIISEDNIDTQKNAA.

34 to 35 (KN) lines the phosphoenolpyruvate pocket. Arg-104 serves as a coordination point for UDP-N-acetyl-alpha-D-glucosamine. The Proton donor role is filled by Cys-128. Position 128 is a 2-(S-cysteinyl)pyruvic acid O-phosphothioketal (Cys-128). UDP-N-acetyl-alpha-D-glucosamine is bound by residues Asp-320 and Val-342.

It belongs to the EPSP synthase family. MurA subfamily.

It is found in the cytoplasm. The enzyme catalyses phosphoenolpyruvate + UDP-N-acetyl-alpha-D-glucosamine = UDP-N-acetyl-3-O-(1-carboxyvinyl)-alpha-D-glucosamine + phosphate. It participates in cell wall biogenesis; peptidoglycan biosynthesis. Cell wall formation. Adds enolpyruvyl to UDP-N-acetylglucosamine. The sequence is that of UDP-N-acetylglucosamine 1-carboxyvinyltransferase from Prochlorococcus marinus (strain NATL2A).